Here is a 559-residue protein sequence, read N- to C-terminus: Germacrene A synthase (559 aa).

5 residues coordinate Mg(2+): Asp312, Asp316, Asp456, Thr460, and Glu464. The short motif at 312–316 (DDTYD) is the DDXXD motif element.

Belongs to the terpene synthase family. Monomer. It depends on Mg(2+) as a cofactor. Expressed in glandular trichomes of all aerial tissues, with highest levels in tissues accumulating parthenolide (e.g. flowers and, to some extent, leaves).

It carries out the reaction (2E,6E)-farnesyl diphosphate = (+)-(R)-germacrene A + diphosphate. It participates in secondary metabolite biosynthesis; terpenoid biosynthesis. Its function is as follows. Sesquiterpene synthase involved in germacrene A biosynthesis. Germacrene A is a precursor of several sesquiterpene lactones. The protein is Germacrene A synthase of Tanacetum parthenium (Feverfew).